The chain runs to 1792 residues: MARCGEGSAAPMVLLGSAGVCSKGLQRKGPCERRRLKATVSEQLSQDLLRLLREEFHTDVTFSVGCTLFKAHKAVLLARVPDFYFHTIGQTSNSLTNQEPIAVENVEALEFRTFLQIIYSSNRNIKNYEEEILRKKIMEIGISQKQLDISFPKCENSSDCSLQKHEIPEDISDRDDDFISNDNYDLEPASELGEDLLKLYVKPCCPDIDIFVDGKRFKAHRAILSARSSYFAAMLSGCWAESSQEYVTLQGISHVELNVMMHFIYGGTLDIPDKTNVGQILNMADMYGLEGLKEVAIYILRRDYCNFFQKPVPRTLTSILECLIIAHSVGVESLFADCMKWIVKHFARFWSERSFANIPPEIQKSCLNMLIQSLNDKNAAFLLMESDRLIISLPRVKWTEAALTMASQLQEKCIAFIVDNFSKIIQSENFALLLQSQAMSSTADLLDTILKAIEENITTENSCSLLMALDTLLNSDSTKEMGFTCKIQALRDKLWIFLVQSFYAVRHTESWKLMSTDDQQKIQAAAFDKGDDRRLGKKPIFSSSQQRKQVSDSGDIKIKSWRGNNKKECWSYLSTNKKMKSDGLGASGHSSSTNRNSINKTLKQDDVKEKDGTKIASKITKELKTGGKNVSGKPKTVTKSKTENGDKARLENMSPRQVVERSATAAAAATGQKNLLNGKGVRNQEGQISGARPKVLTGNLNVQAKAKPLKKATGKDSPCLSIAGPSSRSTDSSMEFSISTECLDEPKENGSTEEEKPSGHKLSFCDSPGQMMKNSVDSVKNSTVAIKSRPVSRVTNGTSNKKSIHEQDTNVNNSVLKKVSGKGCSEPVPQAILKKRGTSNGCTAAQQRTKSTPSNLTKTQGSQGESPNSVKSSVSSRQSDENVAKLDHNTTTEKQAPKRKMVKQVHTALPKVNAKIVAMPKNLNQSKKGETLNNKDSKQKMPPGQVISKTQPSSQRPLKHETSTVQKSMFHDVRDNNNKDSVSEQKPHKPLINLASEISDAEALQSSCRPDPQKPLNDQEKEKLALECQNISKLDKSLKHELESKQICLDKSETKFPNHKETDDCDAANICCHSVGSDNVNSKFYSTTALKYMVSNPNENSLNSNPVCDLDSTSAGQIHLISDRENQVGRKDTNKQSSIKCVEDVSLCNPERTNGTLNSAQEDKKSKVPVEGLTIPSKLSDESAMDEDKHATADSDVSSKCFSGQLSEKNSPKNMETSESPESHETPETPFVGHWNLSTGVLHQRESPESDTGSATTSSDDIKPRSEDYDAGGSQDDDGSNDRGISKCGTMLCHDFLGRSSSDTSTPEELKIYDSNLRIEVKMKKQSNNDLFQVNSTSDDEIPRKRPEIWSRSAIVHSRERENIPRGSVQFAQEIDQVSSSADETEDERSEAENVAENFSISNPAPQQFQGIINLAFEDATENECREFSATKKFKRSVLLSVDECEELGSDEGEVHTPFQASVDSFSPSDVFDGISHEHHGRTCYSRFSRESEDNILECKQNKGNSVCKNESTVLDLSSIDSSRKNKQSVSATEKKNTIDVLSSRSRQLLREDKKVNNGSNVENDIQQRSKFLDSDVKSQERPCHLDLHQREPNSDIPKNSSTKSLDSFRSQVLPQEGPVKESHSTTTEKANIALSAGDIDDCDTLAQTRMYDHRPSKTLSPIYEMDVIEAFEQKVESETHVTDMDFEDDQHFAKQDWTLLKQLLSEQDSNLDVTNSVPEDLSLAQYLINQTLLLARDSSKPQGITHIDTLNRWSELTSPLDSSASITMASFSSEDCSPQGEWTILELETQH.

2 BTB domains span residues 58–127 (TDVT…NIKN) and 206–273 (PDID…DIPD). Disordered stretches follow at residues 528–554 (DKGD…SDSG), 581–658 (SDGL…PRQV), 670–692 (TGQK…SGAR), 707–768 (KPLK…CDSP), 788–815 (SRPV…NNSV), 831–989 (AILK…KPHK), 1151–1283 (ERTN…SNDR), and 1519–1607 (SIDS…KSLD). Composition is skewed to polar residues over residues 541–552 (FSSSQQRKQVSD) and 588–601 (GHSS…INKT). Composition is skewed to basic and acidic residues over residues 602-625 (LKQD…ELKT) and 640-650 (SKTENGDKARL). Polar residues predominate over residues 724–740 (GPSSRSTDSSMEFSIST). A compositionally biased stretch (basic and acidic residues) spans 744–758 (DEPKENGSTEEEKPS). The segment covering 838–865 (TSNGCTAAQQRTKSTPSNLTKTQGSQGE) has biased composition (polar residues). Low complexity predominate over residues 866–877 (SPNSVKSSVSSR). 2 stretches are compositionally biased toward basic and acidic residues: residues 878–891 (QSDE…HNTT) and 927–939 (KKGE…DSKQ). A compositionally biased stretch (polar residues) spans 947-956 (ISKTQPSSQR). The span at 969-987 (MFHDVRDNNNKDSVSEQKP) shows a compositional bias: basic and acidic residues. Polar residues-rich tracts occupy residues 1151 to 1160 (ERTNGTLNSA) and 1195 to 1215 (SDVS…PKNM). The segment covering 1250–1259 (SDTGSATTSS) has biased composition (low complexity). Over residues 1566–1594 (IQQRSKFLDSDVKSQERPCHLDLHQREPN) the composition is skewed to basic and acidic residues. The span at 1597–1607 (IPKNSSTKSLD) shows a compositional bias: polar residues.

As to quaternary structure, interacts (via N-terminus) with adapter protein complex AP-2 subunits alpha (AP2A1) and beta (AP2B1). In terms of tissue distribution, highly expressed in fetal brain. Weakly expressed in adult brain and prostate.

It is found in the cell projection. The protein localises to the axon. Its subcellular location is the presynapse. The protein resides in the cytoplasmic vesicle. It localises to the clathrin-coated vesicle. It is found in the nucleus. Functionally, involved in clathrin-mediated endocytosis at the synapse. Plays a role in neuronal development and in synaptic vesicle recycling in mature neurons, a process required for normal synaptic transmission. This is BTB/POZ domain-containing protein 8 from Homo sapiens (Human).